Reading from the N-terminus, the 77-residue chain is Putative antitoxin VapB3 (77 aa).

Positions 10–60 (RRGLKKELEELGINYAEAVRKFLEELVARERRRRALERARALREELRKKGA) form a coiled coil.

In terms of assembly, forms a complex with putative toxin VapC3, possibly VapB(2)-VapC(2).

Its function is as follows. Antitoxin component of a type II toxin-antitoxin (TA) system. The polypeptide is Putative antitoxin VapB3 (vAPb3) (Pyrobaculum aerophilum (strain ATCC 51768 / DSM 7523 / JCM 9630 / CIP 104966 / NBRC 100827 / IM2)).